A 116-amino-acid polypeptide reads, in one-letter code: Cation channel sperm-associated auxiliary subunit TMEM262 (116 aa).

Topologically, residues 1–16 (MWLQDRIATFFFPKGM) are cytoplasmic. Residues 17 to 38 (MLTTAALMLFFLHLGIFIRDVH) traverse the membrane as a helical segment. The Extracellular segment spans residues 39–51 (NFCITYHYDHMSF). A helical membrane pass occupies residues 52-72 (HYTVVLMFSQVISICWAAMGS). The Cytoplasmic portion of the chain corresponds to 73–84 (LYAEMTENKYVC). The chain crosses the membrane as a helical span at residues 85-107 (FSALTILMLNGAMFFNRLSLEFL). Residues 108 to 116 (AIEYREEHH) are Extracellular-facing.

Component of the CatSper complex or CatSpermasome composed of the core pore-forming members CATSPER1, CATSPER2, CATSPER3 and CATSPER4 as well as auxiliary members CATSPERB, CATSPERG, CATSPERD, CATSPERE, CATSPERZ, C2CD6/CATSPERT, TMEM249, TMEM262 and EFCAB9. HSPA1 may be an additional auxiliary complex member. The core complex members CATSPER1, CATSPER2, CATSPER3 and CATSPER4 form a heterotetrameric channel. The auxiliary CATSPERB, CATSPERG, CATSPERD and CATSPERE subunits form a pavilion-like structure over the pore which stabilizes the complex through interactions with CATSPER4, CATSPER3, CATSPER1 and CATSPER2 respectively. TMEM262/CATSPERH interacts with CATSPERB, further stabilizing the complex. C2CD6/CATSPERT interacts at least with CATSPERD and is required for targeting the CatSper complex in the flagellar membrane.

It is found in the cell projection. The protein localises to the cilium. It localises to the flagellum membrane. Its function is as follows. Auxiliary component of the CatSper complex, a complex involved in sperm cell hyperactivation. The chain is Cation channel sperm-associated auxiliary subunit TMEM262 from Homo sapiens (Human).